A 323-amino-acid polypeptide reads, in one-letter code: Ribose-phosphate pyrophosphokinase (323 aa).

ATP-binding positions include 38–40 and 96–97; these read DGE and RQ. Residues histidine 130 and aspartate 170 each contribute to the Mg(2+) site. Residue lysine 193 is part of the active site. D-ribose 5-phosphate-binding positions include arginine 195, aspartate 219, and 223 to 227; that span reads DTAGT.

The protein belongs to the ribose-phosphate pyrophosphokinase family. Class I subfamily. Homohexamer. Mg(2+) serves as cofactor.

The protein localises to the cytoplasm. It catalyses the reaction D-ribose 5-phosphate + ATP = 5-phospho-alpha-D-ribose 1-diphosphate + AMP + H(+). Its pathway is metabolic intermediate biosynthesis; 5-phospho-alpha-D-ribose 1-diphosphate biosynthesis; 5-phospho-alpha-D-ribose 1-diphosphate from D-ribose 5-phosphate (route I): step 1/1. Functionally, involved in the biosynthesis of the central metabolite phospho-alpha-D-ribosyl-1-pyrophosphate (PRPP) via the transfer of pyrophosphoryl group from ATP to 1-hydroxyl of ribose-5-phosphate (Rib-5-P). The sequence is that of Ribose-phosphate pyrophosphokinase from Chlorobaculum tepidum (strain ATCC 49652 / DSM 12025 / NBRC 103806 / TLS) (Chlorobium tepidum).